Consider the following 296-residue polypeptide: Ribonuclease H2 subunit A (296 aa).

Residues 14–236 (PCLMGIDEAG…CTTHLKGEVE (223 aa)) form the RNase H type-2 domain. Residues Asp20, Glu21, and Asp127 each contribute to the a divalent metal cation site.

The protein belongs to the RNase HII family. Eukaryotic subfamily. Mn(2+) is required as a cofactor. Mg(2+) serves as cofactor.

The catalysed reaction is Endonucleolytic cleavage to 5'-phosphomonoester.. Functionally, catalytic subunit of RNase HII, an endonuclease that specifically degrades the RNA of RNA:DNA hybrids. Participates in DNA replication, possibly by mediating the removal of lagging-strand Okazaki fragment RNA primers during DNA replication. Mediates the excision of single ribonucleotides from DNA:RNA duplexes. The protein is Ribonuclease H2 subunit A of Arabidopsis thaliana (Mouse-ear cress).